A 375-amino-acid polypeptide reads, in one-letter code: Major DNA-binding protein (375 aa).

The protein belongs to the herpesviridae DNA-binding protein family.

It is found in the host nucleus. In terms of biological role, single-stranded DNA-binding protein required for DNA replication. The polypeptide is Major DNA-binding protein (Equine herpesvirus 1 (strain HVS25A) (EHV-1)).